Consider the following 188-residue polypeptide: UPF0398 protein SE_1135 (188 aa).

The protein belongs to the UPF0398 family.

This chain is UPF0398 protein SE_1135, found in Staphylococcus epidermidis (strain ATCC 12228 / FDA PCI 1200).